Here is a 207-residue protein sequence, read N- to C-terminus: Serotonin N-acetyltransferase (207 aa).

The interval 1 to 29 (MSTPSVHCLKPSPLHLPSGIPGSPGRQRR) is disordered. Residues 28 to 35 (RRHTLPAN) form a YWHAZ-binding region. Thr-31 carries the post-translational modification Phosphothreonine; by PKA. Residues 35–196 (NEFRCLTPED…TFTEMHCSLR (162 aa)) form the N-acetyltransferase domain. Leu-124 lines the substrate pocket. Residues 124-126 (LAV) and 132-137 (QQGKGS) each bind acetyl-CoA. Residue Met-159 coordinates substrate. Acetyl-CoA is bound at residue 168–170 (YQR). Ser-205 carries the phosphoserine; by PKA modification.

The protein belongs to the acetyltransferase family. AANAT subfamily. As to quaternary structure, monomer. Interacts with several 14-3-3 proteins, including YWHAB, YWHAE, YWHAG and YWHAZ, preferentially when phosphorylated at Thr-31. Phosphorylation on Ser-205 also allows binding to YWHAZ, but with a 10-fold lower affinity. The interaction with YWHAZ considerably increases affinity for arylalkylamines and acetyl-CoA and protects the enzyme from dephosphorylation and proteasomal degradation. It may also prevent thiol-dependent inactivation. The physiological stoichiometry of the interaction is not clear. In vitro studies show either 1:2 (i.e. 1 AANAT molecule per YWHAZ dimer) or 2:2. In terms of processing, cAMP-dependent phosphorylation on both N-terminal Thr-31 and C-terminal Ser-205 regulates AANAT activity by promoting interaction with 14-3-3 proteins. Highest expression in the pineal gland, followed by retina. Expressed at much lower levels in brainstem and pituitary gland. AANAT activity also detected at low levels in the olfactory lobe.

It localises to the cytoplasm. It catalyses the reaction a 2-arylethylamine + acetyl-CoA = an N-acetyl-2-arylethylamine + CoA + H(+). The protein operates within aromatic compound metabolism; melatonin biosynthesis; melatonin from serotonin: step 1/2. Controls the night/day rhythm of melatonin production in the pineal gland. Catalyzes the N-acetylation of serotonin into N-acetylserotonin, the penultimate step in the synthesis of melatonin. This chain is Serotonin N-acetyltransferase (AANAT), found in Ovis aries (Sheep).